We begin with the raw amino-acid sequence, 1911 residues long: Adenylate kinase 9 (1911 aa).

The segment at 31–285 is adenylate kinase 1; sequence VCFVVFGKPG…LFMIVMDRLK (255 aa). 40 to 45 provides a ligand contact to ATP; sequence GVGKTT. An NMP 1 region spans residues 60–89; the sequence is EALPILEEQIAAETESGVMLQSMLISGQSI. Residues 87–89 and 116–119 contribute to the AMP site; these read QSI and EIPS. The interval 160–205 is LID 1; that stretch reads GQRQHNNTGYIYSRDQWDPEVIENHRKKKKEAQKDGKGEEEEEEEE. The tract at residues 185–210 is disordered; that stretch reads RKKKKEAQKDGKGEEEEEEEEQEEEE. The segment covering 197–210 has biased composition (acidic residues); that stretch reads GEEEEEEEEQEEEE. Arg-229 is a binding site for AMP. 2 coiled-coil regions span residues 443–485 and 676–711; these read AEAT…EFGV and LQKK…TEEE. 2 disordered regions span residues 728 to 796 and 892 to 926; these read KAKE…TEIP and DYEE…KERK. The segment covering 733-750 has biased composition (acidic residues); the sequence is EETDNEDEEEIEGDELEV. Residues 751–761 are compositionally biased toward basic and acidic residues; sequence HEEPEASHDTR. Acidic residues-rich tracts occupy residues 767-791 and 892-919; these read EEFE…ETTV and DYEE…EEGE. 2 adenylate kinase regions span residues 992-1203 and 1412-1601; these read LRIC…ELIL and IRII…KNVQ. Residue 1001 to 1006 coordinates ATP; that stretch reads GSGKTM. The tract at residues 1021–1052 is NMP 2; it reads QFEEVLQEKLLLKTEKKVGPEFEEDSENEQAA. AMP is bound by residues 1050–1052 and 1079–1082; these read QAA and VQLT. Residues 1124–1144 form an LID 2 region; it reads DGFPRYPEEAQFLGDRGFFPD. 1421–1426 lines the ATP pocket; it reads KSGKTT. Positions 1441 to 1472 are NMP 3; it reads SIGGALRYVLNNHPETELALMLNWHLHKGMTA. AMP is bound by residues Arg-1447, 1470 to 1472, 1499 to 1502, Gln-1506, and Arg-1543; these read MTA and GYPV. Positions 1536 to 1550 are LID 3; sequence LEKENEQRLPYPLHN.

The protein belongs to the adenylate kinase family.

It localises to the cytoplasm. It is found in the nucleus. The protein localises to the cell projection. Its subcellular location is the cilium. The protein resides in the flagellum. It catalyses the reaction a ribonucleoside 5'-phosphate + ATP = a ribonucleoside 5'-diphosphate + ADP. The catalysed reaction is AMP + ATP = 2 ADP. The enzyme catalyses GTP + AMP = GDP + ADP. It carries out the reaction CMP + ATP = CDP + ADP. It catalyses the reaction GTP + CMP = CDP + GDP. The catalysed reaction is dAMP + ATP = dADP + ADP. The enzyme catalyses dCMP + ATP = dCDP + ADP. It carries out the reaction a ribonucleoside 5'-diphosphate + ATP = a ribonucleoside 5'-triphosphate + ADP. It catalyses the reaction CDP + ATP = CTP + ADP. The catalysed reaction is CDP + GTP = CTP + GDP. The enzyme catalyses GDP + ATP = GTP + ADP. It carries out the reaction UDP + ATP = UTP + ADP. It catalyses the reaction GTP + UDP = UTP + GDP. The catalysed reaction is dTDP + GTP = dTTP + GDP. The enzyme catalyses dCDP + ATP = dCTP + ADP. It carries out the reaction dCDP + GTP = dCTP + GDP. It catalyses the reaction dGDP + ATP = dGTP + ADP. The catalysed reaction is dTDP + ATP = dTTP + ADP. The enzyme catalyses dADP + GTP = dATP + GDP. Functionally, broad-specificity nucleoside phosphate kinase involved in cellular nucleotide homeostasis by catalyzing nucleoside-phosphate interconversions. Similar to other adenylate kinases, preferentially catalyzes the phosphorylation of the nucleoside monophosphate AMP with ATP as phosphate donor to produce ADP. In vitro, can also catalyze the phosphorylation of CMP, dAMP and dCMP and use GTP as an alternate phosphate donor. Moreover, exhibits a diphosphate kinase activity, producing ATP, CTP, GTP, UTP, TTP, dATP, dCTP and dGTP from the corresponding diphosphate substrates with either ATP or GTP as phosphate donors. For this activity shows the following substrate preference CDP &gt; UDP &gt; ADP &gt; TDP. This chain is Adenylate kinase 9, found in Homo sapiens (Human).